The following is an 865-amino-acid chain: Alanine--tRNA ligase (865 aa).

Zn(2+) contacts are provided by His-554, His-558, Cys-656, and His-660.

Belongs to the class-II aminoacyl-tRNA synthetase family. Zn(2+) serves as cofactor.

It localises to the cytoplasm. The catalysed reaction is tRNA(Ala) + L-alanine + ATP = L-alanyl-tRNA(Ala) + AMP + diphosphate. In terms of biological role, catalyzes the attachment of alanine to tRNA(Ala) in a two-step reaction: alanine is first activated by ATP to form Ala-AMP and then transferred to the acceptor end of tRNA(Ala). Also edits incorrectly charged Ser-tRNA(Ala) and Gly-tRNA(Ala) via its editing domain. The sequence is that of Alanine--tRNA ligase from Francisella tularensis subsp. holarctica (strain LVS).